An 87-amino-acid polypeptide reads, in one-letter code: Phosphoribosyl-ATP pyrophosphatase (87 aa).

It belongs to the PRA-PH family.

It is found in the cytoplasm. The enzyme catalyses 1-(5-phospho-beta-D-ribosyl)-ATP + H2O = 1-(5-phospho-beta-D-ribosyl)-5'-AMP + diphosphate + H(+). It participates in amino-acid biosynthesis; L-histidine biosynthesis; L-histidine from 5-phospho-alpha-D-ribose 1-diphosphate: step 2/9. In Corynebacterium glutamicum (strain ATCC 13032 / DSM 20300 / JCM 1318 / BCRC 11384 / CCUG 27702 / LMG 3730 / NBRC 12168 / NCIMB 10025 / NRRL B-2784 / 534), this protein is Phosphoribosyl-ATP pyrophosphatase (hisE).